A 1572-amino-acid polypeptide reads, in one-letter code: Multiple epidermal growth factor-like domains protein 6 (1572 aa).

Positions 1–26 (MPVGVEARASWRVVALTLLLLPAVPA) are cleaved as a signal peptide. Residues 40 to 121 (MPHVCAEQKL…QKPGQEGCLS (82 aa)) form the EMI domain. Cystine bridges form between Cys-44/Cys-107, Cys-73/Cys-79, Cys-106/Cys-119, Cys-126/Cys-137, Cys-133/Cys-146, Cys-148/Cys-161, Cys-167/Cys-178, Cys-174/Cys-187, Cys-189/Cys-202, Cys-291/Cys-302, Cys-298/Cys-311, Cys-313/Cys-326, Cys-418/Cys-429, Cys-425/Cys-438, Cys-440/Cys-453, Cys-522/Cys-535, Cys-529/Cys-542, Cys-544/Cys-553, Cys-566/Cys-578, Cys-572/Cys-585, Cys-587/Cys-596, Cys-609/Cys-621, Cys-615/Cys-628, Cys-630/Cys-639, Cys-788/Cys-797, Cys-791/Cys-804, Cys-806/Cys-815, Cys-832/Cys-840, Cys-834/Cys-847, Cys-849/Cys-858, Cys-871/Cys-884, Cys-875/Cys-891, Cys-893/Cys-902, Cys-915/Cys-927, Cys-921/Cys-934, and Cys-936/Cys-945. In terms of domain architecture, EGF-like 1; calcium-binding spans 122–162 (DVDECANANGGCEGPCCNTVGGFYCRCPPGYQLQGDGKTCQ). Positions 163 to 203 (DVDECRSHNGGCQHRCVNTPGSYLCECKPGFRLHTDGRTCL) constitute an EGF-like 2; calcium-binding domain. In terms of domain architecture, EGF-like 3; calcium-binding spans 287–327 (DVDECALGLAQCAHGCLNTQGSFKCVCHAGYELGADGRQCY). The EGF-like 4; calcium-binding domain occupies 414-454 (DVDECASGHSGCEHHCSNLAGSFQCFCEAGYRLDEDRRGCT). 17 EGF-like domains span residues 518–554 (FGHD…IICN), 562–597 (FGKN…AHCE), 605–640 (YGKH…RFCH), 785–816 (QEIC…SRCQ), 829–859 (QMRC…LSCQ), 867–903 (WGPD…PQCE), 911–946 (FGPG…SFCE), 997–1032 (FGLN…PTCL), 1040–1075 (YGKN…LACE), 1083–1118 (HGAG…DKCQ), 1131–1161 (EEHC…SHCE), 1169–1204 (FGEA…PGCE), 1256–1291 (YGPG…ADCS), 1299–1334 (FGPS…GHCE), 1342–1377 (FGKG…PHCE), 1390–1420 (LLEC…QACE), and 1428–1463 (HGSG…QFCE). Residue Asn-1000 is glycosylated (N-linked (GlcNAc...) asparagine). Disulfide bonds link Cys-1001/Cys-1013, Cys-1007/Cys-1020, Cys-1022/Cys-1031, Cys-1044/Cys-1056, Cys-1050/Cys-1063, Cys-1065/Cys-1074, Cys-1087/Cys-1099, Cys-1093/Cys-1106, Cys-1108/Cys-1117, Cys-1134/Cys-1142, Cys-1136/Cys-1149, Cys-1151/Cys-1160, Cys-1173/Cys-1185, Cys-1177/Cys-1192, Cys-1194/Cys-1203, Cys-1260/Cys-1272, Cys-1266/Cys-1279, Cys-1281/Cys-1290, Cys-1303/Cys-1315, Cys-1309/Cys-1322, Cys-1324/Cys-1333, Cys-1346/Cys-1358, Cys-1352/Cys-1365, Cys-1367/Cys-1376, Cys-1393/Cys-1401, Cys-1395/Cys-1408, Cys-1410/Cys-1419, Cys-1432/Cys-1444, Cys-1438/Cys-1451, and Cys-1453/Cys-1462.

It localises to the secreted. The sequence is that of Multiple epidermal growth factor-like domains protein 6 (Megf6) from Mus musculus (Mouse).